The sequence spans 465 residues: Ribulose bisphosphate carboxylase large chain (465 aa).

At Lys4 the chain carries N6,N6,N6-trimethyllysine. Asn113 and Thr163 together coordinate substrate. The active-site Proton acceptor is Lys165. Lys167 is a substrate binding site. Residues Lys191, Asp193, and Glu194 each contribute to the Mg(2+) site. An N6-carboxylysine modification is found at Lys191. His284 functions as the Proton acceptor in the catalytic mechanism. Substrate-binding residues include Arg285, His317, and Ser369.

Belongs to the RuBisCO large chain family. Type I subfamily. Heterohexadecamer of 8 large chains and 8 small chains; disulfide-linked. The disulfide link is formed within the large subunit homodimers. The cofactor is Mg(2+). The disulfide bond which can form in the large chain dimeric partners within the hexadecamer appears to be associated with oxidative stress and protein turnover.

Its subcellular location is the plastid. The protein resides in the chloroplast. It catalyses the reaction 2 (2R)-3-phosphoglycerate + 2 H(+) = D-ribulose 1,5-bisphosphate + CO2 + H2O. The catalysed reaction is D-ribulose 1,5-bisphosphate + O2 = 2-phosphoglycolate + (2R)-3-phosphoglycerate + 2 H(+). In terms of biological role, ruBisCO catalyzes two reactions: the carboxylation of D-ribulose 1,5-bisphosphate, the primary event in carbon dioxide fixation, as well as the oxidative fragmentation of the pentose substrate in the photorespiration process. Both reactions occur simultaneously and in competition at the same active site. The protein is Ribulose bisphosphate carboxylase large chain of Ailanthus altissima (Tree-of-heaven).